A 321-amino-acid chain; its full sequence is Lactamase-like protein notP (321 aa).

Zn(2+)-binding residues include histidine 108, histidine 110, aspartate 112, and histidine 113. Residue aspartate 112 is the Proton donor/acceptor of the active site.

The protein belongs to the metallo-beta-lactamase superfamily. It depends on Zn(2+) as a cofactor.

Lactamase-like protein; part of the gene cluster that mediates the biosynthesis of notoamide, a fungal indole alkaloid that belongs to a family of natural products containing a characteristic bicyclo[2.2.2]diazaoctane core. The first step of notoamide biosynthesis involves coupling of L-proline and L-tryptophan by the bimodular NRPS notE, to produce cyclo-L-tryptophan-L-proline called brevianamide F. The reverse prenyltransferase notF then acts as a deoxybrevianamide E synthase and converts brevianamide F to deoxybrevianamide E via reverse prenylation at C-2 of the indole ring leading to the bicyclo[2.2.2]diazaoctane core. Deoxybrevianamide E is further hydroxylated at C-6 of the indole ring, likely catalyzed by the cytochrome P450 monooxygenase notG, to yield 6-hydroxy-deoxybrevianamide E. 6-hydroxy-deoxybrevianamide E is a specific substrate of the prenyltransferase notC for normal prenylation at C-7 to produce 6-hydroxy-7-prenyl-deoxybrevianamide, also called notoamide S. As the proposed pivotal branching point in notoamide biosynthesis, notoamide S can be diverted to notoamide E through an oxidative pyran ring closure putatively catalyzed by either notH cytochrome P450 monooxygenase or the notD FAD-linked oxidoreductase. This step would be followed by an indole 2,3-epoxidation-initiated pinacol-like rearrangement catalyzed by the notB FAD-dependent monooxygenase leading to the formation of notoamide C and notoamide D. On the other hand notoamide S is converted to notoamide T by notH (or notD), a bifunctional oxidase that also functions as the intramolecular Diels-Alderase responsible for generation of (+)-notoamide T. To generate antipodal (-)-notoaminide T, notH' (or notD') in Aspergillus versicolor is expected to catalyze a Diels-Alder reaction leading to the opposite stereochemistry. The remaining oxidoreductase notD (or notH) likely catalyzes the oxidative pyran ring formation to yield (+)-stephacidin A. The FAD-dependent monooxygenase notI is highly similar to notB and is predicted to catalyze a similar conversion from (+)-stephacidin A to (-)-notoamide B via the 2,3-epoxidation of (+)-stephacidin A followed by a pinacol-type rearrangement. Finally, it remains unclear which enzyme could be responsible for the final hydroxylation steps leading to notoamide A and sclerotiamide. The function of notP in the notoamide biosynthesis has not been determined yet. The chain is Lactamase-like protein notP from Aspergillus sp. (strain MF297-2).